Here is a 362-residue protein sequence, read N- to C-terminus: Aminomethyltransferase (362 aa).

Belongs to the GcvT family. In terms of assembly, the glycine cleavage system is composed of four proteins: P, T, L and H.

It carries out the reaction N(6)-[(R)-S(8)-aminomethyldihydrolipoyl]-L-lysyl-[protein] + (6S)-5,6,7,8-tetrahydrofolate = N(6)-[(R)-dihydrolipoyl]-L-lysyl-[protein] + (6R)-5,10-methylene-5,6,7,8-tetrahydrofolate + NH4(+). In terms of biological role, the glycine cleavage system catalyzes the degradation of glycine. In Porphyromonas gingivalis (strain ATCC 33277 / DSM 20709 / CIP 103683 / JCM 12257 / NCTC 11834 / 2561), this protein is Aminomethyltransferase.